Reading from the N-terminus, the 120-residue chain is MIF-like protein mif-2 (120 aa).

It belongs to the MIF family.

The protein is MIF-like protein mif-2 (mif-2) of Caenorhabditis elegans.